Here is a 363-residue protein sequence, read N- to C-terminus: NADH-quinone oxidoreductase subunit H (363 aa).

A run of 9 helical transmembrane segments spans residues 62–82 (GPMY…KLLF), 96–116 (FVIA…VVPF), 127–147 (VGLL…ILAG), 163–183 (AAQV…VMIA), 202–222 (FFDW…VSGV), 238–257 (EIVA…LFFL), 264–286 (ILVS…QGWV), 299–319 (KGGW…YIWF), and 339–359 (FIPL…YGVI).

The protein belongs to the complex I subunit 1 family. As to quaternary structure, NDH-1 is composed of 14 different subunits. Subunits NuoA, H, J, K, L, M, N constitute the membrane sector of the complex.

The protein resides in the cell inner membrane. The catalysed reaction is a quinone + NADH + 5 H(+)(in) = a quinol + NAD(+) + 4 H(+)(out). In terms of biological role, NDH-1 shuttles electrons from NADH, via FMN and iron-sulfur (Fe-S) centers, to quinones in the respiratory chain. The immediate electron acceptor for the enzyme in this species is believed to be ubiquinone. Couples the redox reaction to proton translocation (for every two electrons transferred, four hydrogen ions are translocated across the cytoplasmic membrane), and thus conserves the redox energy in a proton gradient. This subunit may bind ubiquinone. The chain is NADH-quinone oxidoreductase subunit H from Xanthomonas axonopodis pv. citri (strain 306).